We begin with the raw amino-acid sequence, 150 residues long: PTS system galactitol-specific EIIA component (150 aa).

The region spanning Met-1–Tyr-144 is the PTS EIIA type-2 domain. Catalysis depends on His-62, which acts as the Tele-phosphohistidine intermediate. At His-62 the chain carries Phosphohistidine; by HPr.

Forms a complex with one each of subunit of GatA, GatB and 2 subunits of GatC.

It localises to the cytoplasm. The phosphoenolpyruvate-dependent sugar phosphotransferase system (sugar PTS), a major carbohydrate active transport system, catalyzes the phosphorylation of incoming sugar substrates concomitantly with their translocation across the cell membrane. The enzyme II complex composed of GatA, GatB and GatC is involved in galactitol transport. This is PTS system galactitol-specific EIIA component (gatA) from Escherichia coli O157:H7.